A 327-amino-acid polypeptide reads, in one-letter code: Phenylalanine--tRNA ligase alpha subunit (327 aa).

Residue glutamate 252 participates in Mg(2+) binding.

The protein belongs to the class-II aminoacyl-tRNA synthetase family. Phe-tRNA synthetase alpha subunit type 1 subfamily. As to quaternary structure, tetramer of two alpha and two beta subunits. Mg(2+) is required as a cofactor.

It localises to the cytoplasm. The catalysed reaction is tRNA(Phe) + L-phenylalanine + ATP = L-phenylalanyl-tRNA(Phe) + AMP + diphosphate + H(+). This chain is Phenylalanine--tRNA ligase alpha subunit, found in Proteus mirabilis (strain HI4320).